The primary structure comprises 231 residues: 2-C-methyl-D-erythritol 4-phosphate cytidylyltransferase (231 aa).

The protein belongs to the IspD/TarI cytidylyltransferase family. IspD subfamily.

It carries out the reaction 2-C-methyl-D-erythritol 4-phosphate + CTP + H(+) = 4-CDP-2-C-methyl-D-erythritol + diphosphate. It functions in the pathway isoprenoid biosynthesis; isopentenyl diphosphate biosynthesis via DXP pathway; isopentenyl diphosphate from 1-deoxy-D-xylulose 5-phosphate: step 2/6. Catalyzes the formation of 4-diphosphocytidyl-2-C-methyl-D-erythritol from CTP and 2-C-methyl-D-erythritol 4-phosphate (MEP). The sequence is that of 2-C-methyl-D-erythritol 4-phosphate cytidylyltransferase from Lysinibacillus sphaericus (strain C3-41).